The following is a 100-amino-acid chain: Serine protease inhibitor 1 protein (100 aa).

Positions 1–20 (MKHLLIVSLVFVTIIWKIEC) are cleaved as a signal peptide. Disulfide bonds link Cys42/Cys74, Cys51/Cys69, Cys54/Cys65, Cys58/Cys93, and Cys76/Cys90. The 52-residue stretch at 42-93 (CGLNEVWMVCSSCEEECGKTPQPCPRICQPARCQCPAHKGYRRDGQGNCIFC) folds into the TIL domain.

It is found in the secreted. This Caenorhabditis elegans protein is Serine protease inhibitor 1 protein.